The sequence spans 310 residues: MTVTVKMLVTKVKLDVVYATDDLLEKEITTSDISRPGLEMTGYFDYYAPERLQLFGMKEWSYLTQMTSHNRYSVLKEMFKKDTPAVIVSRGLAIPEEMVQAAQEEGIALFSSRVSTSRLAGEMSYFLDASLAERTSVHGVLMDIYGMGVLIQGDSGIGKSETGLELVKRGHRLVADDRVDVFAKDEETLWGEPAEILRHLLEIRGVGIIDVMSLYGASAVKDSSQVQLAIYLENFEAGKVFDRLGNGNEEITFSGVSIPRIRIPVKTGRNVSVVIEAAAMNHRAKEMGFDATKTFEERLTRLISKNEEGK.

Catalysis depends on residues His-138 and Lys-159. 153 to 160 (GDSGIGKS) is an ATP binding site. Ser-160 is a Mg(2+) binding site. The active-site Proton acceptor; for phosphorylation activity. Proton donor; for dephosphorylation activity is Asp-177. The interval 201-210 (LEIRGVGIID) is important for the catalytic mechanism of both phosphorylation and dephosphorylation. Glu-202 contacts Mg(2+). Arg-243 is a catalytic residue. Residues 264-269 (PVKTGR) are important for the catalytic mechanism of dephosphorylation.

It belongs to the HPrK/P family. Homohexamer. It depends on Mg(2+) as a cofactor.

The enzyme catalyses [HPr protein]-L-serine + ATP = [HPr protein]-O-phospho-L-serine + ADP + H(+). It carries out the reaction [HPr protein]-O-phospho-L-serine + phosphate + H(+) = [HPr protein]-L-serine + diphosphate. In terms of biological role, catalyzes the ATP- as well as the pyrophosphate-dependent phosphorylation of a specific serine residue in HPr, a phosphocarrier protein of the phosphoenolpyruvate-dependent sugar phosphotransferase system (PTS). HprK/P also catalyzes the pyrophosphate-producing, inorganic phosphate-dependent dephosphorylation (phosphorolysis) of seryl-phosphorylated HPr (P-Ser-HPr). The two antagonistic activities of HprK/P are regulated by several intracellular metabolites, which change their concentration in response to the absence or presence of rapidly metabolisable carbon sources (glucose, fructose, etc.) in the growth medium. Therefore, by controlling the phosphorylation state of HPr, HPrK/P is a sensor enzyme that plays a major role in the regulation of carbon metabolism and sugar transport: it mediates carbon catabolite repression (CCR), and regulates PTS-catalyzed carbohydrate uptake and inducer exclusion. In Streptococcus equi subsp. equi (strain 4047), this protein is HPr kinase/phosphorylase.